The primary structure comprises 310 residues: Tetrahydromethanopterin S-methyltransferase subunit H (310 aa).

This sequence belongs to the MtrH family. The complex is composed of 8 subunits; MtrA, MtrB, MtrC, MtrD, MtrE, MtrF, MtrG and MtrH.

The enzyme catalyses 5-methyl-5,6,7,8-tetrahydromethanopterin + coenzyme M + 2 Na(+)(in) = 5,6,7,8-tetrahydromethanopterin + methyl-coenzyme M + 2 Na(+)(out). It functions in the pathway one-carbon metabolism; methanogenesis from CO(2); methyl-coenzyme M from 5,10-methylene-5,6,7,8-tetrahydromethanopterin: step 2/2. Its function is as follows. Part of a complex that catalyzes the formation of methyl-coenzyme M and tetrahydromethanopterin from coenzyme M and methyl-tetrahydromethanopterin. This is an energy-conserving, sodium-ion translocating step. MtrH catalyzes the transfer of the methyl group from methyl-tetrahydromethanopterin to the corrinoid prosthetic group of MtrA. This is Tetrahydromethanopterin S-methyltransferase subunit H from Methanothermobacter thermautotrophicus (strain ATCC 29096 / DSM 1053 / JCM 10044 / NBRC 100330 / Delta H) (Methanobacterium thermoautotrophicum).